The primary structure comprises 78 residues: Large ribosomal subunit protein uL29 (78 aa).

Residues 59–78 (VESERKRGKSLSSTQTQKEE) form a disordered region. Residues 68-78 (SLSSTQTQKEE) are compositionally biased toward polar residues.

Belongs to the universal ribosomal protein uL29 family.

The protein is Large ribosomal subunit protein uL29 of Synechococcus sp. (strain JA-3-3Ab) (Cyanobacteria bacterium Yellowstone A-Prime).